Here is a 244-residue protein sequence, read N- to C-terminus: MTPDIRVVIPARYASTRLPAKPLALIGGVPMIVRTAQQVAQAGFPYCVAYDDERIGDVLAAHHIPAIKTRFTHENGTQRLSEVVIARAWTDETIVVNVQGDEPLLPPDLITTVARTLIEHTQASVATLATVCDAPESPNTVKVVCDCAGYALYFSRSVMPYVRDAAAPPVSYLRHIGIYAYRVQLLKRYPQLAPTPLEQAEKLEQLRFLEHGFKIAVAQIDEAPPAGVDSPEDLARVQALFVHE.

Belongs to the KdsB family.

The protein resides in the cytoplasm. It catalyses the reaction 3-deoxy-alpha-D-manno-oct-2-ulosonate + CTP = CMP-3-deoxy-beta-D-manno-octulosonate + diphosphate. It functions in the pathway nucleotide-sugar biosynthesis; CMP-3-deoxy-D-manno-octulosonate biosynthesis; CMP-3-deoxy-D-manno-octulosonate from 3-deoxy-D-manno-octulosonate and CTP: step 1/1. It participates in bacterial outer membrane biogenesis; lipopolysaccharide biosynthesis. Activates KDO (a required 8-carbon sugar) for incorporation into bacterial lipopolysaccharide in Gram-negative bacteria. The chain is 3-deoxy-manno-octulosonate cytidylyltransferase from Dichelobacter nodosus (strain VCS1703A).